The chain runs to 131 residues: Large ribosomal subunit protein bL19 (131 aa).

The protein belongs to the bacterial ribosomal protein bL19 family.

Its function is as follows. This protein is located at the 30S-50S ribosomal subunit interface and may play a role in the structure and function of the aminoacyl-tRNA binding site. In Anaeromyxobacter sp. (strain K), this protein is Large ribosomal subunit protein bL19.